The chain runs to 121 residues: Large ribosomal subunit protein bL12 (121 aa).

The protein belongs to the bacterial ribosomal protein bL12 family. Homodimer. Part of the ribosomal stalk of the 50S ribosomal subunit. Forms a multimeric L10(L12)X complex, where L10 forms an elongated spine to which 2 to 4 L12 dimers bind in a sequential fashion. Binds GTP-bound translation factors.

Forms part of the ribosomal stalk which helps the ribosome interact with GTP-bound translation factors. Is thus essential for accurate translation. The protein is Large ribosomal subunit protein bL12 of Serratia proteamaculans (strain 568).